We begin with the raw amino-acid sequence, 461 residues long: Nicotianamine aminotransferase A (461 aa).

The tract at residues 1–29 (MVHQSNGHGEAAAAAANGKSNGHAAAANG) is disordered. The segment covering 11 to 29 (AAAAAANGKSNGHAAAANG) has biased composition (low complexity). At K289 the chain carries N6-(pyridoxal phosphate)lysine.

This sequence belongs to the class-I pyridoxal-phosphate-dependent aminotransferase family. Pyridoxal 5'-phosphate is required as a cofactor. Expressed in roots, but not in leaves.

The enzyme catalyses nicotianamine + 2-oxoglutarate = 3''-deamino-3''-oxonicotianamine + L-glutamate. Involved in biosynthesis of mugineic acid family phytosiderophores. In Hordeum vulgare (Barley), this protein is Nicotianamine aminotransferase A.